The sequence spans 287 residues: Very long chain fatty acid elongase 4 (287 aa).

3 consecutive transmembrane segments (helical) span residues 33–53 (ILVY…EHIM), 64–84 (PFVV…YSCV), and 115–135 (FWVF…VFLV). Positions 145-149 (HWYHH) match the HxxHH motif motif. H148 acts as the Nucleophile in catalysis. Helical transmembrane passes span 150 to 170 (LTVA…GLWF), 172 to 192 (TMNY…ACGM), 199 to 219 (IAPF…LIVL), and 241 to 261 (LGLV…GKLY).

Belongs to the ELO family.

It is found in the membrane. It catalyses the reaction a very-long-chain acyl-CoA + malonyl-CoA + H(+) = a very-long-chain 3-oxoacyl-CoA + CO2 + CoA. Functionally, involved in the synthesis of fatty acids. Elongates C16:0 and C18:0 fatty acids to C26:0, with C24:0 being the main product. The chain is Very long chain fatty acid elongase 4 from Trypanosoma cruzi (strain CL Brener).